The sequence spans 325 residues: Protein SAR DEFICIENT 4 (325 aa).

Residues 1-42 constitute a chloroplast transit peptide; it reads MAALPVFIPAESFPSILSHETLINHFRTNLPKHSSTITSPVR.

It belongs to the ornithine cyclodeaminase/mu-crystallin family.

Its subcellular location is the plastid. It is found in the chloroplast. In terms of biological role, involved in the biosynthesis of pipecolate (Pip), a metabolite that orchestrates defense amplification, positive regulation of salicylic acid (SA) biosynthesis, and priming to guarantee effective local resistance induction and the establishment of systemic acquired resistance (SAR). Converts delta-(1)-piperideine-2-carboxylate (P2C) to Pip. Mediates reduction of P2C and biosynthesis of Pip in systemic tissue and contributes to SAR establishment. Does not possess ornithine cyclodeaminase activity in vitro. The polypeptide is Protein SAR DEFICIENT 4 (Arabidopsis thaliana (Mouse-ear cress)).